The sequence spans 600 residues: ATP-dependent lipid A-core flippase (600 aa).

6 helical membrane passes run Thr28–Ile48, Val80–Phe100, Ala159–Phe179, Trp182–Val202, Val267–Ala287, and Glu295–Ile315. Residues Leu29–Arg327 enclose the ABC transmembrane type-1 domain. The ABC transporter domain maps to Leu359 to Met596. Gly393 to Ser400 is a binding site for ATP.

Belongs to the ABC transporter superfamily. Lipid exporter (TC 3.A.1.106) family. As to quaternary structure, homodimer.

The protein localises to the cell inner membrane. The enzyme catalyses ATP + H2O + lipid A-core oligosaccharideSide 1 = ADP + phosphate + lipid A-core oligosaccharideSide 2.. Functionally, involved in lipopolysaccharide (LPS) biosynthesis. Translocates lipid A-core from the inner to the outer leaflet of the inner membrane. Transmembrane domains (TMD) form a pore in the inner membrane and the ATP-binding domain (NBD) is responsible for energy generation. The polypeptide is ATP-dependent lipid A-core flippase (Shewanella denitrificans (strain OS217 / ATCC BAA-1090 / DSM 15013)).